The chain runs to 253 residues: Phosphoadenosine 5'-phosphosulfate reductase (253 aa).

Cysteine 239 functions as the Nucleophile; cysteine thiosulfonate intermediate in the catalytic mechanism.

This sequence belongs to the PAPS reductase family. CysH subfamily.

It is found in the cytoplasm. It carries out the reaction [thioredoxin]-disulfide + sulfite + adenosine 3',5'-bisphosphate + 2 H(+) = [thioredoxin]-dithiol + 3'-phosphoadenylyl sulfate. The protein operates within sulfur metabolism; hydrogen sulfide biosynthesis; sulfite from sulfate: step 3/3. In terms of biological role, catalyzes the formation of sulfite from phosphoadenosine 5'-phosphosulfate (PAPS) using thioredoxin as an electron donor. The protein is Phosphoadenosine 5'-phosphosulfate reductase of Aliivibrio fischeri (strain MJ11) (Vibrio fischeri).